The sequence spans 633 residues: Glutamyl-tRNA(Gln) amidotransferase subunit E (633 aa).

Residues 414-437 (ALPDGNTEYMRPLPGKARMYPETD) form a disordered region.

Belongs to the GatB/GatE family. GatE subfamily. In terms of assembly, heterodimer of GatD and GatE.

The enzyme catalyses L-glutamyl-tRNA(Gln) + L-glutamine + ATP + H2O = L-glutaminyl-tRNA(Gln) + L-glutamate + ADP + phosphate + H(+). Functionally, allows the formation of correctly charged Gln-tRNA(Gln) through the transamidation of misacylated Glu-tRNA(Gln) in organisms which lack glutaminyl-tRNA synthetase. The reaction takes place in the presence of glutamine and ATP through an activated gamma-phospho-Glu-tRNA(Gln). The GatDE system is specific for glutamate and does not act on aspartate. The protein is Glutamyl-tRNA(Gln) amidotransferase subunit E of Pyrococcus abyssi (strain GE5 / Orsay).